Consider the following 172-residue polypeptide: Large ribosomal subunit protein uL10 (172 aa).

The protein belongs to the universal ribosomal protein uL10 family. In terms of assembly, part of the ribosomal stalk of the 50S ribosomal subunit. The N-terminus interacts with L11 and the large rRNA to form the base of the stalk. The C-terminus forms an elongated spine to which L12 dimers bind in a sequential fashion forming a multimeric L10(L12)X complex.

Forms part of the ribosomal stalk, playing a central role in the interaction of the ribosome with GTP-bound translation factors. The polypeptide is Large ribosomal subunit protein uL10 (Chlorobium limicola (strain DSM 245 / NBRC 103803 / 6330)).